A 1171-amino-acid chain; its full sequence is Structural maintenance of chromosomes protein 2-2 (1171 aa).

The Zinc-hook domain maps to 2–1158 (HIKEICLEGF…DVLFRTKFVD (1157 aa)). Position 32–39 (32–39 (GLNGSGKS)) interacts with ATP. Residues 172–510 (RMYENKKEAA…LANVQFTYRD (339 aa)) are a coiled coil. The SMC hinge domain occupies 518 to 635 (SKVKGVVAKL…KTTDAAKEVA (118 aa)). The stretch at 674-1026 (HDLAEAETKF…LDEKKKETLK (353 aa)) forms a coiled coil.

It belongs to the SMC family. SMC2 subfamily. Forms a heterodimer with SMC4. Component of the condensin complex, which contains the SMC2 and SMC4 heterodimer, and three non SMC subunits that probably regulate the complex: CAPH, CAPD2 and CAPG. Highly expressed in roots and young floral buds.

Its subcellular location is the nucleus. Its function is as follows. Central component of the condensin complex, a complex required for conversion of interphase chromatin into mitotic-like condense chromosomes. The condensin complex probably introduces positive supercoils into relaxed DNA in the presence of type I topoisomerases and converts nicked DNA into positive knotted forms in the presence of type II topoisomerases. Also involved in chromosome segregation in meiosis. This chain is Structural maintenance of chromosomes protein 2-2 (SMC2-2), found in Arabidopsis thaliana (Mouse-ear cress).